The following is a 169-amino-acid chain: Lipoprotein signal peptidase (169 aa).

The next 2 helical transmembrane spans lie at 56–76 (FLPP…VIIY) and 84–104 (QPLF…NLID). Residues D113 and D139 contribute to the active site. The helical transmembrane segment at 132 to 152 (WPIFNIADSAITIGACMLIIF) threads the bilayer.

Belongs to the peptidase A8 family.

The protein localises to the cell inner membrane. It catalyses the reaction Release of signal peptides from bacterial membrane prolipoproteins. Hydrolyzes -Xaa-Yaa-Zaa-|-(S,diacylglyceryl)Cys-, in which Xaa is hydrophobic (preferably Leu), and Yaa (Ala or Ser) and Zaa (Gly or Ala) have small, neutral side chains.. It functions in the pathway protein modification; lipoprotein biosynthesis (signal peptide cleavage). Functionally, this protein specifically catalyzes the removal of signal peptides from prolipoproteins. This Chlorobium phaeovibrioides (strain DSM 265 / 1930) (Prosthecochloris vibrioformis (strain DSM 265)) protein is Lipoprotein signal peptidase.